The sequence spans 501 residues: Microtubule-associated protein mmb1 (501 aa).

3 stretches are compositionally biased toward polar residues: residues Asn-61–Val-95, Arg-103–Ala-122, and His-132–Ala-168. Disordered regions lie at residues Asn-61 to Asn-274, Val-328 to Asn-381, and Asn-478 to Ile-501. A compositionally biased stretch (low complexity) spans Ser-234 to Val-252. Polar residues-rich tracts occupy residues Asn-253 to Asn-274, Ser-367 to Asn-381, and Asn-478 to Leu-495.

It localises to the cytoplasm. The protein resides in the cytoskeleton. Its function is as follows. Involved in the cell polarity process and in regulation of microtubule growth. Has a role in meiosis. Involved in microtubule dynamics. Binds to mitochondria and microtubules, attaching the tubular mitochondria to the microtubule lattice at multiple discrete interaction sites. In Schizosaccharomyces pombe (strain 972 / ATCC 24843) (Fission yeast), this protein is Microtubule-associated protein mmb1.